We begin with the raw amino-acid sequence, 334 residues long: Nucleoid-associated protein plu2870 (334 aa).

This sequence belongs to the YejK family.

It is found in the cytoplasm. The protein localises to the nucleoid. This is Nucleoid-associated protein plu2870 from Photorhabdus laumondii subsp. laumondii (strain DSM 15139 / CIP 105565 / TT01) (Photorhabdus luminescens subsp. laumondii).